The sequence spans 311 residues: NAD kinase (311 aa).

D67 acts as the Proton acceptor in catalysis. NAD(+) is bound by residues 67 to 68 (DG), R72, 140 to 141 (ND), R151, D170, 181 to 186 (TAYSLS), and Q240. Over residues 278–287 (LKEGGSRQDD) the composition is skewed to basic and acidic residues. The segment at 278 to 311 (LKEGGSRQDDENPAATVNPETDSKYPHSHPGSTG) is disordered.

The protein belongs to the NAD kinase family. Requires a divalent metal cation as cofactor.

Its subcellular location is the cytoplasm. It catalyses the reaction NAD(+) + ATP = ADP + NADP(+) + H(+). Functionally, involved in the regulation of the intracellular balance of NAD and NADP, and is a key enzyme in the biosynthesis of NADP. Catalyzes specifically the phosphorylation on 2'-hydroxyl of the adenosine moiety of NAD to yield NADP. This chain is NAD kinase, found in Moorella thermoacetica (strain ATCC 39073 / JCM 9320).